The chain runs to 118 residues: uncharacterized protein (118 aa).

A disordered region spans residues 1-49 (MDYVGGSLKLKNVKKKPLKKKKKDSKKLAEKVQEHSSRDKSPLEENGVS). The span at 11 to 25 (KNVKKKPLKKKKKDS) shows a compositional bias: basic residues. Over residues 26 to 43 (KKLAEKVQEHSSRDKSPL) the composition is skewed to basic and acidic residues.

This is an uncharacterized protein from Schizosaccharomyces pombe (strain 972 / ATCC 24843) (Fission yeast).